Reading from the N-terminus, the 313-residue chain is PDZ domain-containing protein GIPC2 (313 aa).

A compositionally biased stretch (basic and acidic residues) spans 14–27 (KETSRLVEGEHTDA). The tract at residues 14-34 (KETSRLVEGEHTDAAVRSLPS) is disordered. In terms of domain architecture, PDZ spans 117 to 197 (EVNVYKSEDS…EELFTLTLIE (81 aa)).

This sequence belongs to the GIPC family. As to quaternary structure, probably interacts with SEMA5A.

The protein localises to the cytoplasm. This Bos taurus (Bovine) protein is PDZ domain-containing protein GIPC2 (GIPC2).